Consider the following 116-residue polypeptide: Large ribosomal subunit protein bL19 (116 aa).

This sequence belongs to the bacterial ribosomal protein bL19 family.

In terms of biological role, this protein is located at the 30S-50S ribosomal subunit interface and may play a role in the structure and function of the aminoacyl-tRNA binding site. The sequence is that of Large ribosomal subunit protein bL19 from Mycoplasma mobile (strain ATCC 43663 / 163K / NCTC 11711) (Mesomycoplasma mobile).